Reading from the N-terminus, the 369-residue chain is Glutamine synthetase 2 cytoplasmic (369 aa).

Positions 32–112 (VQATYVWIDG…VMCDTYKFDG (81 aa)) constitute a GS beta-grasp domain. One can recognise a GS catalytic domain in the interval 119 to 369 (KRKTCLEVAN…AILRTICLDE (251 aa)).

It belongs to the glutamine synthetase family. As to quaternary structure, homooctamer.

The protein localises to the cytoplasm. The enzyme catalyses L-glutamate + NH4(+) + ATP = L-glutamine + ADP + phosphate + H(+). The chain is Glutamine synthetase 2 cytoplasmic (Gs2) from Drosophila melanogaster (Fruit fly).